Here is a 153-residue protein sequence, read N- to C-terminus: Deoxyuridine 5'-triphosphate nucleotidohydrolase (153 aa).

Residues 71–73, Asn-84, 88–90, and Lys-98 each bind substrate; these read RSG and TID.

This sequence belongs to the dUTPase family. Requires Mg(2+) as cofactor.

The catalysed reaction is dUTP + H2O = dUMP + diphosphate + H(+). The protein operates within pyrimidine metabolism; dUMP biosynthesis; dUMP from dCTP (dUTP route): step 2/2. This enzyme is involved in nucleotide metabolism: it produces dUMP, the immediate precursor of thymidine nucleotides and it decreases the intracellular concentration of dUTP so that uracil cannot be incorporated into DNA. This is Deoxyuridine 5'-triphosphate nucleotidohydrolase from Wolbachia pipientis subsp. Culex pipiens (strain wPip).